Consider the following 150-residue polypeptide: Dual specificity protein phosphatase 23 (150 aa).

The Tyrosine-protein phosphatase domain occupies 7-150; it reads NFSWVLPGRL…AVFQFYQRTK (144 aa). The Phosphocysteine intermediate role is filled by Cys95.

It belongs to the protein-tyrosine phosphatase family. Non-receptor class dual specificity subfamily. As to expression, widely expressed.

Its subcellular location is the cytoplasm. The protein resides in the cytosol. It is found in the nucleus. The enzyme catalyses O-phospho-L-tyrosyl-[protein] + H2O = L-tyrosyl-[protein] + phosphate. It catalyses the reaction O-phospho-L-seryl-[protein] + H2O = L-seryl-[protein] + phosphate. The catalysed reaction is O-phospho-L-threonyl-[protein] + H2O = L-threonyl-[protein] + phosphate. Functionally, protein phosphatase that mediates dephosphorylation of proteins phosphorylated on Tyr and Ser/Thr residues. In vitro, it can dephosphorylate p44-ERK1 (MAPK3) but not p54 SAPK-beta (MAPK10) in vitro. Able to enhance activation of JNK and p38 (MAPK14). In Mus musculus (Mouse), this protein is Dual specificity protein phosphatase 23 (Dusp23).